The primary structure comprises 315 residues: Rhomboid-related protein 4 (315 aa).

At 1 to 21 (MQRRTRGINTGLLLLLSQVFQ) the chain is on the cytoplasmic side. A helical transmembrane segment spans residues 22–42 (IGINNIPPVTLATLAVNVWFF). Topologically, residues 43 to 103 (LNPWKPLYHS…KLERRLGSRW (61 aa)) are lumenal. A helical transmembrane segment spans residues 104–124 (FAYVIATFSLLTGVVYLLLQF). Over 125-137 (TVAELLNQPDFKR) the chain is Cytoplasmic. A helical transmembrane segment spans residues 138–154 (NCAVGFSGVLFALKVLS). S144 serves as the catalytic Nucleophile. The Lumenal portion of the chain corresponds to 155-180 (NHYCPGGFVNILGFPVPNRFACWAEL). Residues 181 to 201 (VAIHFCTPGTSFAGHLAGILV) traverse the membrane as a helical segment. H195 is an active-site residue. Over 202–315 (GLMYTQGPLK…RQRLHRFDGQ (114 aa)) the chain is Cytoplasmic. The segment at 269-284 (SEEEQLERALRASIWD) is ubiquitin-binding domain (UBD). Residues 301–315 (PEEMRRQRLHRFDGQ) form a VCP/p97-interacting motif (VIM) region.

This sequence belongs to the peptidase S54 family. Interacts with BIK and STEAP3. Interacts (via C-terminal domain) with VCP/P97. Interacts with ubiquitin and ubiquitinated proteins. As to expression, expressed in testis (at protein level). Expressed in intestine, lung, brain, kidney, epididymis, stomach, muscle, spleen, liver, heart and testis.

The protein localises to the endoplasmic reticulum membrane. It is found in the mitochondrion membrane. The catalysed reaction is Cleaves type-1 transmembrane domains using a catalytic dyad composed of serine and histidine that are contributed by different transmembrane domains.. With respect to regulation, inhibited by aprotinin. Intramembrane-cleaving serine protease that cleaves single transmembrane or multi-pass membrane proteins in the hydrophobic plane of the membrane, luminal loops and juxtamembrane regions. Involved in regulated intramembrane proteolysis and the subsequent release of functional polypeptides from their membrane anchors. Functional component of endoplasmic reticulum-associated degradation (ERAD) for misfolded membrane proteins. Required for the degradation process of some specific misfolded endoplasmic reticulum (ER) luminal proteins. Participates in the transfer of misfolded proteins from the ER to the cytosol, where they are destroyed by the proteasome in a ubiquitin-dependent manner. Functions in BIK, MPZ, PKD1, PTCRA, RHO, STEAP3 and TRAC processing. Involved in the regulation of exosomal secretion; inhibits the TSAP6-mediated secretion pathway. Involved in the regulation of apoptosis; modulates BIK-mediated apoptotic activity. Also plays a role in the regulation of spermatogenesis; inhibits apoptotic activity in spermatogonia. The sequence is that of Rhomboid-related protein 4 (Rhbdd1) from Mus musculus (Mouse).